A 683-amino-acid chain; its full sequence is Phenoloxidase 3 (683 aa).

A propeptide spanning residues 1-48 (MADKKNLLLLFDHPTEPVFMDKGGNGTVFDVPDSYVTDRYNQMCKKVQ) is cleaved from the precursor. Residues His-209, His-213, and His-239 each contribute to the Cu cation site. Glu-351 acts as the Proton acceptor in catalysis. Asn-358 is a glycosylation site (N-linked (GlcNAc...) asparagine). Residues His-366, His-370, and His-406 each coordinate Cu cation. Asn-492 and Asn-546 each carry an N-linked (GlcNAc...) asparagine glycan. 2 cysteine pairs are disulfide-bonded: Cys-574-Cys-617 and Cys-576-Cys-624.

The protein belongs to the tyrosinase family. Requires Cu(2+) as cofactor. In terms of processing, upon activation, a trypsin type protease cleaves prophenol oxidase to yield the active enzyme.

The protein localises to the secreted. The catalysed reaction is 2 L-dopa + O2 = 2 L-dopaquinone + 2 H2O. The enzyme catalyses L-tyrosine + O2 = L-dopaquinone + H2O. In terms of biological role, this is a copper-containing oxidase that functions in the formation of pigments such as melanins and other polyphenolic compounds. Catalyzes the rate-limiting conversions of tyrosine to DOPA, DOPA to DOPA-quinone and possibly 5,6 dihydroxyindole to indole-5'6 quinone. This chain is Phenoloxidase 3 (PPO3), found in Drosophila melanogaster (Fruit fly).